The chain runs to 307 residues: UPF0282 protein PH1002 (307 aa).

Belongs to the UPF0282 family.

The protein is UPF0282 protein PH1002 of Pyrococcus horikoshii (strain ATCC 700860 / DSM 12428 / JCM 9974 / NBRC 100139 / OT-3).